The following is a 291-amino-acid chain: Beta-lactamase CTX-M-6 (291 aa).

The N-terminal stretch at 1-28 (MMTQSIRRSMLTVMATLPLLFSSATLHA) is a signal peptide. Ser73 functions as the Acyl-ester intermediate in the catalytic mechanism. 237 to 239 (KTG) is a binding site for substrate.

It belongs to the class-A beta-lactamase family.

It carries out the reaction a beta-lactam + H2O = a substituted beta-amino acid. Has cefotaxime-hydrolyzing activity. The protein is Beta-lactamase CTX-M-6 (bla) of Salmonella typhimurium.